We begin with the raw amino-acid sequence, 65 residues long: Gallinacin-12 (65 aa).

The signal sequence occupies residues 1-19 (MRNLCFVFIFISLLAHGST). Intrachain disulfides connect Cys-25-Cys-54, Cys-32-Cys-47, and Cys-37-Cys-55.

The protein belongs to the beta-defensin family. In terms of tissue distribution, expressed in the large intestine, kidney liver, gall bladder, testis, ovary and male and female reproductive tracts. Expressed in the ovarian stroma and the theca and granulosa layers of the ovarian follicle.

The protein resides in the secreted. The protein localises to the cytoplasmic granule. Has bactericidal activity. In Gallus gallus (Chicken), this protein is Gallinacin-12 (GAL12).